An 87-amino-acid chain; its full sequence is Kawaguchipeptin peptide (87 aa).

The propeptide occupies 1 to 33 (MKNPTLLPKLTAPVERPAVTSSDLKQASSVDAA). Trp-34 carries the 3'-prenyl-2',N2-cyclotryptophan; partial lipid modification. A cross-link (cyclopeptide (Trp-Pro)) is located at residues 34-44 (WLNGDNNWSTP). Leu-35 is subject to D-leucine; partial. Residue Trp-41 is the site of 3'-prenyl-2',N2-cyclotryptophan; partial attachment. Positions 45-51 (FAGVNAA) are excised as a propeptide. A lipid anchor (3'-prenyl-2',N2-cyclotryptophan; partial) is attached at Trp-52. The cyclopeptide (Trp-Pro) cross-link spans 52 to 62 (WLNGDNNWSTP). Leu-53 is subject to D-leucine; partial. The 3'-prenyl-2',N2-cyclotryptophan; partial moiety is linked to residue Trp-59. Positions 63–69 (FAGVNAA) are excised as a propeptide. The 3'-prenyl-2',N2-cyclotryptophan; partial moiety is linked to residue Trp-70. Positions 70 to 80 (WLNGDNNWSTP) form a cross-link, cyclopeptide (Trp-Pro). Residue Leu-71 is modified to D-leucine; partial. Trp-77 carries 3'-prenyl-2',N2-cyclotryptophan; partial lipidation. The propeptide occupies 81 to 87 (FAADGAE).

Post-translationally, kawaguchipeptin A contains a D-Leu and 2 prenylated Trp, whereas kawaguchipeptin B only contains unmodified amino acids. In terms of processing, kawaguchipeptin A is prenylated in vivo. Upon expression in E.coli of the whole operon, Trp residues are prenylated by C-prenyltransferase KgpF. Prenylation by KgpF is likely the last enzymatic step in the biosynthetic maturation of kawaguchipeptin A.

Its function is as follows. Both kawaguchipeptin A and B, which only differ by post-translational modifications, have antibacterial activities, since they inhibit the growth of the Gram-positive bacterium S.aureus at a concentration of 1 ug/mL. The polypeptide is Kawaguchipeptin peptide (Microcystis aeruginosa (strain NIES-88 / KW-MA1-3)).